The chain runs to 290 residues: 4-diphosphocytidyl-2-C-methyl-D-erythritol kinase (290 aa).

Residue K8 is part of the active site. 89–99 (PIGAGVGGGSS) contacts ATP. Residue D131 is part of the active site.

This sequence belongs to the GHMP kinase family. IspE subfamily.

The enzyme catalyses 4-CDP-2-C-methyl-D-erythritol + ATP = 4-CDP-2-C-methyl-D-erythritol 2-phosphate + ADP + H(+). The protein operates within isoprenoid biosynthesis; isopentenyl diphosphate biosynthesis via DXP pathway; isopentenyl diphosphate from 1-deoxy-D-xylulose 5-phosphate: step 3/6. Functionally, catalyzes the phosphorylation of the position 2 hydroxy group of 4-diphosphocytidyl-2C-methyl-D-erythritol. In Chlamydia felis (strain Fe/C-56) (Chlamydophila felis), this protein is 4-diphosphocytidyl-2-C-methyl-D-erythritol kinase.